The chain runs to 26 residues: Dermaseptin-J4 (26 aa).

Valine 26 bears the Valine amide mark.

In terms of tissue distribution, expressed by the skin glands.

The protein resides in the secreted. Functionally, has antimicrobial activity. In Phasmahyla jandaia (Jandaia leaf frog), this protein is Dermaseptin-J4.